The following is a 396-amino-acid chain: Tryptophan synthase beta chain (396 aa).

Position 86 is an N6-(pyridoxal phosphate)lysine (lysine 86).

It belongs to the TrpB family. Tetramer of two alpha and two beta chains. It depends on pyridoxal 5'-phosphate as a cofactor.

The enzyme catalyses (1S,2R)-1-C-(indol-3-yl)glycerol 3-phosphate + L-serine = D-glyceraldehyde 3-phosphate + L-tryptophan + H2O. Its pathway is amino-acid biosynthesis; L-tryptophan biosynthesis; L-tryptophan from chorismate: step 5/5. Its function is as follows. The beta subunit is responsible for the synthesis of L-tryptophan from indole and L-serine. This chain is Tryptophan synthase beta chain, found in Erwinia tasmaniensis (strain DSM 17950 / CFBP 7177 / CIP 109463 / NCPPB 4357 / Et1/99).